Consider the following 300-residue polypeptide: Ubiquitin thioesterase otu2 (300 aa).

Disordered stretches follow at residues 23–73 (RKQL…QQED) and 89–141 (TAEK…SEKM). Residues 48–61 (LSQKHATERQKLDK) are compositionally biased toward basic and acidic residues. The span at 62-71 (GDEETNETQQ) shows a compositional bias: acidic residues. Polar residues predominate over residues 89-109 (TAEKSSVQSSLNTKENTPQQP). Over residues 115-141 (RQKERLERRKAEMKKMSEQAELESEKM) the composition is skewed to basic and acidic residues. The OTU domain occupies 161-298 (LVAVDIPADG…GAHYNSLLYR (138 aa)).

Its subcellular location is the cytoplasm. It carries out the reaction Thiol-dependent hydrolysis of ester, thioester, amide, peptide and isopeptide bonds formed by the C-terminal Gly of ubiquitin (a 76-residue protein attached to proteins as an intracellular targeting signal).. Its function is as follows. Hydrolase that can remove conjugated ubiquitin from proteins and may therefore play an important regulatory role at the level of protein turnover by preventing degradation. In Schizosaccharomyces pombe (strain 972 / ATCC 24843) (Fission yeast), this protein is Ubiquitin thioesterase otu2 (otu2).